The primary structure comprises 115 residues: Holo-[acyl-carrier-protein] synthase (115 aa).

2 residues coordinate Mg(2+): aspartate 6 and glutamate 51.

This sequence belongs to the P-Pant transferase superfamily. AcpS family. It depends on Mg(2+) as a cofactor.

The protein localises to the cytoplasm. The enzyme catalyses apo-[ACP] + CoA = holo-[ACP] + adenosine 3',5'-bisphosphate + H(+). Its function is as follows. Transfers the 4'-phosphopantetheine moiety from coenzyme A to a Ser of acyl-carrier-protein. This chain is Holo-[acyl-carrier-protein] synthase, found in Campylobacter jejuni (strain RM1221).